A 215-amino-acid polypeptide reads, in one-letter code: Probable transaldolase (215 aa).

Lys-83 acts as the Schiff-base intermediate with substrate in catalysis.

Belongs to the transaldolase family. Type 3B subfamily.

It localises to the cytoplasm. The enzyme catalyses D-sedoheptulose 7-phosphate + D-glyceraldehyde 3-phosphate = D-erythrose 4-phosphate + beta-D-fructose 6-phosphate. It participates in carbohydrate degradation; pentose phosphate pathway; D-glyceraldehyde 3-phosphate and beta-D-fructose 6-phosphate from D-ribose 5-phosphate and D-xylulose 5-phosphate (non-oxidative stage): step 2/3. Its function is as follows. Transaldolase is important for the balance of metabolites in the pentose-phosphate pathway. The polypeptide is Probable transaldolase (Bdellovibrio bacteriovorus (strain ATCC 15356 / DSM 50701 / NCIMB 9529 / HD100)).